The following is a 506-amino-acid chain: 2-isopropylmalate synthase (506 aa).

Residues 8-272 enclose the Pyruvate carboxyltransferase domain; sequence LIVFDTTLRD…ETGIQLKEIL (265 aa). Mn(2+)-binding residues include aspartate 17, histidine 206, histidine 208, and asparagine 242. A regulatory domain region spans residues 396–506; that stretch reads ELEYVAVTVC…YLNAVNKALL (111 aa).

It belongs to the alpha-IPM synthase/homocitrate synthase family. LeuA type 1 subfamily. Homodimer. Mn(2+) serves as cofactor.

The protein resides in the cytoplasm. It catalyses the reaction 3-methyl-2-oxobutanoate + acetyl-CoA + H2O = (2S)-2-isopropylmalate + CoA + H(+). The protein operates within amino-acid biosynthesis; L-leucine biosynthesis; L-leucine from 3-methyl-2-oxobutanoate: step 1/4. In terms of biological role, catalyzes the condensation of the acetyl group of acetyl-CoA with 3-methyl-2-oxobutanoate (2-ketoisovalerate) to form 3-carboxy-3-hydroxy-4-methylpentanoate (2-isopropylmalate). The sequence is that of 2-isopropylmalate synthase from Methylacidiphilum infernorum (isolate V4) (Methylokorus infernorum (strain V4)).